A 221-amino-acid polypeptide reads, in one-letter code: Pyridoxine/pyridoxamine 5'-phosphate oxidase (221 aa).

Residues 1–21 (MDYSDPAELRESYDGAPLDPR) are disordered. Substrate contacts are provided by residues 10 to 13 (RESY) and K68. FMN-binding positions include 63-68 (RTVLLK), 78-79 (FT), R84, K85, and Q107. Residues Y125, R129, and S133 each coordinate substrate. Residues 143-144 (QS) and W189 each bind FMN. 195–197 (RMH) provides a ligand contact to substrate. R199 is a binding site for FMN.

Belongs to the pyridoxamine 5'-phosphate oxidase family. As to quaternary structure, homodimer. Requires FMN as cofactor.

The catalysed reaction is pyridoxamine 5'-phosphate + O2 + H2O = pyridoxal 5'-phosphate + H2O2 + NH4(+). The enzyme catalyses pyridoxine 5'-phosphate + O2 = pyridoxal 5'-phosphate + H2O2. The protein operates within cofactor metabolism; pyridoxal 5'-phosphate salvage; pyridoxal 5'-phosphate from pyridoxamine 5'-phosphate: step 1/1. Its pathway is cofactor metabolism; pyridoxal 5'-phosphate salvage; pyridoxal 5'-phosphate from pyridoxine 5'-phosphate: step 1/1. Its function is as follows. Catalyzes the oxidation of either pyridoxine 5'-phosphate (PNP) or pyridoxamine 5'-phosphate (PMP) into pyridoxal 5'-phosphate (PLP). The polypeptide is Pyridoxine/pyridoxamine 5'-phosphate oxidase (Thermobifida fusca (strain YX)).